Here is a 376-residue protein sequence, read N- to C-terminus: Queuine tRNA-ribosyltransferase (376 aa).

Catalysis depends on D90, which acts as the Proton acceptor. Substrate-binding positions include 90 to 94 (DSGGF), D144, Q193, and G220. Positions 251–257 (GVGTPED) are RNA binding. D270 acts as the Nucleophile in catalysis. Residues 275–279 (TRNAR) are RNA binding; important for wobble base 34 recognition. The Zn(2+) site is built by C308, C310, C313, and H339.

This sequence belongs to the queuine tRNA-ribosyltransferase family. In terms of assembly, homodimer. Within each dimer, one monomer is responsible for RNA recognition and catalysis, while the other monomer binds to the replacement base PreQ1. Zn(2+) is required as a cofactor.

It carries out the reaction 7-aminomethyl-7-carbaguanine + guanosine(34) in tRNA = 7-aminomethyl-7-carbaguanosine(34) in tRNA + guanine. The protein operates within tRNA modification; tRNA-queuosine biosynthesis. Catalyzes the base-exchange of a guanine (G) residue with the queuine precursor 7-aminomethyl-7-deazaguanine (PreQ1) at position 34 (anticodon wobble position) in tRNAs with GU(N) anticodons (tRNA-Asp, -Asn, -His and -Tyr). Catalysis occurs through a double-displacement mechanism. The nucleophile active site attacks the C1' of nucleotide 34 to detach the guanine base from the RNA, forming a covalent enzyme-RNA intermediate. The proton acceptor active site deprotonates the incoming PreQ1, allowing a nucleophilic attack on the C1' of the ribose to form the product. After dissociation, two additional enzymatic reactions on the tRNA convert PreQ1 to queuine (Q), resulting in the hypermodified nucleoside queuosine (7-(((4,5-cis-dihydroxy-2-cyclopenten-1-yl)amino)methyl)-7-deazaguanosine). This is Queuine tRNA-ribosyltransferase from Cupriavidus necator (strain ATCC 17699 / DSM 428 / KCTC 22496 / NCIMB 10442 / H16 / Stanier 337) (Ralstonia eutropha).